The following is a 185-amino-acid chain: Ribosome-recycling factor (185 aa).

This sequence belongs to the RRF family.

It localises to the cytoplasm. Responsible for the release of ribosomes from messenger RNA at the termination of protein biosynthesis. May increase the efficiency of translation by recycling ribosomes from one round of translation to another. This Baumannia cicadellinicola subsp. Homalodisca coagulata protein is Ribosome-recycling factor.